The sequence spans 202 residues: dITP/XTP pyrophosphatase (202 aa).

Ser-7–Lys-12 contacts substrate. Asp-68 functions as the Proton acceptor in the catalytic mechanism. Residue Asp-68 participates in Mg(2+) binding. Substrate contacts are provided by residues Ser-69, Phe-156–Asp-159, Lys-179, and His-184–Arg-185.

This sequence belongs to the HAM1 NTPase family. As to quaternary structure, homodimer. It depends on Mg(2+) as a cofactor.

It carries out the reaction XTP + H2O = XMP + diphosphate + H(+). It catalyses the reaction dITP + H2O = dIMP + diphosphate + H(+). The catalysed reaction is ITP + H2O = IMP + diphosphate + H(+). Pyrophosphatase that catalyzes the hydrolysis of nucleoside triphosphates to their monophosphate derivatives, with a high preference for the non-canonical purine nucleotides XTP (xanthosine triphosphate), dITP (deoxyinosine triphosphate) and ITP. Seems to function as a house-cleaning enzyme that removes non-canonical purine nucleotides from the nucleotide pool, thus preventing their incorporation into DNA/RNA and avoiding chromosomal lesions. The sequence is that of dITP/XTP pyrophosphatase from Frankia alni (strain DSM 45986 / CECT 9034 / ACN14a).